The sequence spans 185 residues: Comitin (185 aa).

Residues 1 to 123 (MELLRQGEHL…YKQILYSSKP (123 aa)) enclose the Bulb-type lectin domain. Residues 138–185 (SGHPQSAYPPQQPGYGYPAQPGYPPQPGYPPQHGYPPQHGYPQQPGYY) form a disordered region. Positions 141–157 (PQSAYPPQQPGYGYPAQ) are enriched in low complexity. Tandem repeats lie at residues 153–158 (GYPAQP), 159–164 (GYPPQP), 165–170 (GYPPQH), 171–176 (GYPPQH), and 177–182 (GYPQQP). The tract at residues 153 to 182 (GYPAQPGYPPQPGYPPQHGYPPQHGYPQQP) is 5 X 6 AA tandem repeats of G-Y-P-X-Q-[PH]. Residues 158-171 (PGYPPQPGYPPQHG) are compositionally biased toward pro residues. Low complexity predominate over residues 172-185 (YPPQHGYPQQPGYY).

Homodimer in solution. In terms of processing, the N-terminus is blocked.

It is found in the golgi apparatus membrane. Its subcellular location is the endomembrane system. The protein localises to the cytoplasm. The protein resides in the cytoskeleton. May have a role in cell motility. It has high affinity for both G-actin and F-actin. Binds to vesicle membranes via mannose residues and, by way of its interaction with actin, links these membranes to the cytoskeleton. This Dictyostelium discoideum (Social amoeba) protein is Comitin (comA).